The following is a 292-amino-acid chain: MAFMKKYLLPILGIFLAYYYYSANEEFRPEMLRGKRVIVTGASKGIGREMAYHLARMGAHVVVTARSEESLKKVVSRCLELGAASAHYVAGTMENMTFAEQFVAKAGELVGGLDMLILNHINYTPLRVFSNDIHLLRRSLEVNLLSYVVLSTAALPMLKQTSGSIVVVSSVAGKIACPLAAAYSASKFALDGFFSSLRTEYEATKVNVSITLCILGLIDTDTAMKAVAGIYNAEASPKEECALEIIKGGALRQDEVYYDNSILTSLLLKNPGRKIMEFLSLKKYNMERFINN.

Residues 1-7 (MAFMKKY) lie on the Cytoplasmic side of the membrane. The helical; Signal-anchor for type II membrane protein transmembrane segment at 8–24 (LLPILGIFLAYYYYSAN) threads the bilayer. Residues 25–292 (EEFRPEMLRG…KYNMERFINN (268 aa)) lie on the Lumenal side of the membrane. Residues 41 to 67 (GASK…TARS) and 92 to 93 (TM) each bind NADP(+). An N-linked (GlcNAc...) asparagine glycan is attached at asparagine 95. An NADP(+)-binding site is contributed by 119–121 (NHI). Serine 170 provides a ligand contact to substrate. The Proton acceptor role is filled by tyrosine 183. 183 to 187 (YSASK) is an NADP(+) binding site. Asparagine 207 is a glycosylation site (N-linked (GlcNAc...) asparagine). NADP(+) is bound by residues 216–222 (GLIDTDT) and 218–222 (IDTDT).

The protein belongs to the short-chain dehydrogenases/reductases (SDR) family. In terms of assembly, homodimer. As to expression, liver, kidney, lung, hypothalamus, anterior pituitary and placenta.

The protein resides in the endoplasmic reticulum membrane. It catalyses the reaction an 11beta-hydroxysteroid + NADP(+) = an 11-oxosteroid + NADPH + H(+). It carries out the reaction corticosterone + NADP(+) = 11-dehydrocorticosterone + NADPH + H(+). The catalysed reaction is cortisone + NADPH + H(+) = cortisol + NADP(+). The enzyme catalyses a 7beta-hydroxysteroid + NADP(+) = a 7-oxosteroid + NADPH + H(+). It catalyses the reaction 7-oxocholesterol + NADPH + H(+) = 7beta-hydroxycholesterol + NADP(+). It carries out the reaction chenodeoxycholate + NADP(+) = 7-oxolithocholate + NADPH + H(+). The catalysed reaction is 7-oxolithocholate + NADPH + H(+) = ursodeoxycholate + NADP(+). The enzyme catalyses glycochenodeoxycholate + NADP(+) = 7-oxoglycolithocholate + NADPH + H(+). It catalyses the reaction taurochenodeoxycholate + NADP(+) = 7-oxotaurolithocholate + NADPH + H(+). It carries out the reaction tauroursodeoxycholate + NADP(+) = 7-oxotaurolithocholate + NADPH + H(+). The catalysed reaction is glycoursodeoxycholate + NADP(+) = 7-oxoglycolithocholate + NADPH + H(+). The enzyme catalyses 7-oxopregnenolone + NADPH + H(+) = 7beta-hydroxypregnenolone + NADP(+). It catalyses the reaction 3beta,7alpha-dihydroxyandrost-5-en-17-one + NADP(+) = 3beta-hydroxy-5-androstene-7,17-dione + NADPH + H(+). It carries out the reaction 3beta-hydroxy-5-androstene-7,17-dione + NADPH + H(+) = 3beta,7beta-dihydroxyandrost-5-en-17-one + NADP(+). The catalysed reaction is 3beta-hydroxy-5alpha-androstane-7,17-dione + NADPH + H(+) = 3beta,7beta-dihydroxy-5alpha-androstan-17-one + NADP(+). Controls the reversible conversion of biologically active glucocorticoids such as cortisone to cortisol, and 11-dehydrocorticosterone to corticosterone in the presence of NADP(H). Participates in the corticosteroid receptor-mediated anti-inflammatory response, as well as metabolic and homeostatic processes. Plays a role in the secretion of aqueous humor in the eye, maintaining a normotensive, intraocular environment. Bidirectional in vitro, predominantly functions as a reductase in vivo, thereby increasing the concentration of active glucocorticoids. It has broad substrate specificity, besides glucocorticoids, it accepts other steroid and sterol substrates. Interconverts 7-oxo- and 7-hydroxy-neurosteroids such as 7-oxopregnenolone and 7beta-hydroxypregnenolone, 7-oxodehydroepiandrosterone (3beta-hydroxy-5-androstene-7,17-dione) and 7beta-hydroxydehydroepiandrosterone (3beta,7beta-dihydroxyandrost-5-en-17-one), among others. Catalyzes the stereo-specific conversion of the major dietary oxysterol, 7-ketocholesterol (7-oxocholesterol), into the more polar 7-beta-hydroxycholesterol metabolite. 7-oxocholesterol is one of the most important oxysterols, it participates in several events such as induction of apoptosis, accumulation in atherosclerotic lesions, lipid peroxidation, and induction of foam cell formation. Mediates the 7-oxo reduction of 7-oxolithocholate mainly to chenodeoxycholate, and to a lesser extent to ursodeoxycholate, both in its free form and when conjugated to glycine or taurine, providing a link between glucocorticoid activation and bile acid metabolism. Catalyzes the synthesis of 7-beta-25-dihydroxycholesterol from 7-oxo-25-hydroxycholesterol in vitro, which acts as a ligand for the G-protein-coupled receptor (GPCR) Epstein-Barr virus-induced gene 2 (EBI2) and may thereby regulate immune cell migration. This Ovis aries (Sheep) protein is 11-beta-hydroxysteroid dehydrogenase 1 (HSD11B1).